We begin with the raw amino-acid sequence, 397 residues long: Mannonate dehydratase (397 aa).

It belongs to the mannonate dehydratase family. The cofactor is Fe(2+). Requires Mn(2+) as cofactor.

It catalyses the reaction D-mannonate = 2-dehydro-3-deoxy-D-gluconate + H2O. It participates in carbohydrate metabolism; pentose and glucuronate interconversion. Functionally, catalyzes the dehydration of D-mannonate. In Saccharophagus degradans (strain 2-40 / ATCC 43961 / DSM 17024), this protein is Mannonate dehydratase.